The sequence spans 86 residues: Small ribosomal subunit protein bS16 (86 aa).

It belongs to the bacterial ribosomal protein bS16 family.

The protein is Small ribosomal subunit protein bS16 of Thermoanaerobacter pseudethanolicus (strain ATCC 33223 / 39E) (Clostridium thermohydrosulfuricum).